The sequence spans 184 residues: FMRFamide-related peptides (184 aa).

Positions M1–E44 are excised as a propeptide. A Phenylalanine amide modification is found at F56. A propeptide spanning residues G59–P83 is cleaved from the precursor. At F94 the chain carries Phenylalanine amide. Positions S97–P107 are excised as a propeptide. The residue at position 119 (F119) is a Phenylalanine amide. A propeptide spanning residues N122 to E184 is cleaved from the precursor.

The protein belongs to the FARP (FMRFamide related peptide) family. In terms of tissue distribution, expressed throughout the central nervous system.

Its subcellular location is the secreted. In insects, FMRFamide and related peptides have modulatory actions at skeletal neuromuscular junctions, and peptides that are immunologically related to FMRFamide are released into the circulation from neurohemal organs. The chain is FMRFamide-related peptides from Camponotus floridanus (Florida carpenter ant).